The primary structure comprises 398 residues: Dual-specificity RNA methyltransferase RlmN (398 aa).

Glutamate 119 (proton acceptor) is an active-site residue. The region spanning 125–364 (EADRATLCVS…TIVRKTRGDD (240 aa)) is the Radical SAM core domain. Cysteine 132 and cysteine 369 form a disulfide bridge. 3 residues coordinate [4Fe-4S] cluster: cysteine 139, cysteine 143, and cysteine 146. S-adenosyl-L-methionine-binding positions include 193-194 (GE), serine 225, 247-249 (SLH), and asparagine 326. Residue cysteine 369 is the S-methylcysteine intermediate of the active site.

Belongs to the radical SAM superfamily. RlmN family. It depends on [4Fe-4S] cluster as a cofactor.

It localises to the cytoplasm. The enzyme catalyses adenosine(2503) in 23S rRNA + 2 reduced [2Fe-2S]-[ferredoxin] + 2 S-adenosyl-L-methionine = 2-methyladenosine(2503) in 23S rRNA + 5'-deoxyadenosine + L-methionine + 2 oxidized [2Fe-2S]-[ferredoxin] + S-adenosyl-L-homocysteine. It catalyses the reaction adenosine(37) in tRNA + 2 reduced [2Fe-2S]-[ferredoxin] + 2 S-adenosyl-L-methionine = 2-methyladenosine(37) in tRNA + 5'-deoxyadenosine + L-methionine + 2 oxidized [2Fe-2S]-[ferredoxin] + S-adenosyl-L-homocysteine. In terms of biological role, specifically methylates position 2 of adenine 2503 in 23S rRNA and position 2 of adenine 37 in tRNAs. m2A2503 modification seems to play a crucial role in the proofreading step occurring at the peptidyl transferase center and thus would serve to optimize ribosomal fidelity. The protein is Dual-specificity RNA methyltransferase RlmN of Yersinia pestis.